The following is a 360-amino-acid chain: GDSL esterase/lipase At1g06990 (360 aa).

An N-terminal signal peptide occupies residues 1 to 22 (MLIHVIIFMIITTMQFSTTCHA). N-linked (GlcNAc...) asparagine glycosylation is found at N26 and N31. The Nucleophile role is filled by S44. N-linked (GlcNAc...) asparagine glycans are attached at residues N73, N126, and N272. Residues D335 and H338 contribute to the active site.

The protein belongs to the 'GDSL' lipolytic enzyme family.

The protein localises to the secreted. The chain is GDSL esterase/lipase At1g06990 from Arabidopsis thaliana (Mouse-ear cress).